Here is a 311-residue protein sequence, read N- to C-terminus: 4-hydroxy-tetrahydrodipicolinate synthase (311 aa).

Pyruvate is bound at residue Thr49. The active-site Proton donor/acceptor is Tyr138. The Schiff-base intermediate with substrate role is filled by Lys166. Ile207 is a binding site for pyruvate.

It belongs to the DapA family. In terms of assembly, homotetramer; dimer of dimers.

The protein localises to the cytoplasm. It catalyses the reaction L-aspartate 4-semialdehyde + pyruvate = (2S,4S)-4-hydroxy-2,3,4,5-tetrahydrodipicolinate + H2O + H(+). The protein operates within amino-acid biosynthesis; L-lysine biosynthesis via DAP pathway; (S)-tetrahydrodipicolinate from L-aspartate: step 3/4. In terms of biological role, catalyzes the condensation of (S)-aspartate-beta-semialdehyde [(S)-ASA] and pyruvate to 4-hydroxy-tetrahydrodipicolinate (HTPA). This Lactobacillus acidophilus (strain ATCC 700396 / NCK56 / N2 / NCFM) protein is 4-hydroxy-tetrahydrodipicolinate synthase.